A 220-amino-acid polypeptide reads, in one-letter code: Octanoyltransferase (220 aa).

The 187-residue stretch at 31-217 (ENTPDEIWLV…HFAEILGYNA (187 aa)) folds into the BPL/LPL catalytic domain. Substrate is bound by residues 70–77 (RGGQITYH), 146–148 (SLG), and 159–161 (GLA). Residue Cys-177 is the Acyl-thioester intermediate of the active site.

The protein belongs to the LipB family.

It localises to the cytoplasm. It carries out the reaction octanoyl-[ACP] + L-lysyl-[protein] = N(6)-octanoyl-L-lysyl-[protein] + holo-[ACP] + H(+). Its pathway is protein modification; protein lipoylation via endogenous pathway; protein N(6)-(lipoyl)lysine from octanoyl-[acyl-carrier-protein]: step 1/2. Functionally, catalyzes the transfer of endogenously produced octanoic acid from octanoyl-acyl-carrier-protein onto the lipoyl domains of lipoate-dependent enzymes. Lipoyl-ACP can also act as a substrate although octanoyl-ACP is likely to be the physiological substrate. This Actinobacillus succinogenes (strain ATCC 55618 / DSM 22257 / CCUG 43843 / 130Z) protein is Octanoyltransferase.